We begin with the raw amino-acid sequence, 386 residues long: Queuine tRNA-ribosyltransferase (386 aa).

The Proton acceptor role is filled by Asp102. Substrate is bound by residues 102–106, Asp156, Gln203, and Gly230; that span reads DSGGY. An RNA binding region spans residues 261 to 267; that stretch reads GVGKPDD. The active-site Nucleophile is the Asp280. Residues 285 to 289 are RNA binding; important for wobble base 34 recognition; that stretch reads TRSGR. 4 residues coordinate Zn(2+): Cys318, Cys320, Cys323, and His349.

This sequence belongs to the queuine tRNA-ribosyltransferase family. In terms of assembly, homodimer. Within each dimer, one monomer is responsible for RNA recognition and catalysis, while the other monomer binds to the replacement base PreQ1. Requires Zn(2+) as cofactor.

The catalysed reaction is 7-aminomethyl-7-carbaguanine + guanosine(34) in tRNA = 7-aminomethyl-7-carbaguanosine(34) in tRNA + guanine. It functions in the pathway tRNA modification; tRNA-queuosine biosynthesis. In terms of biological role, catalyzes the base-exchange of a guanine (G) residue with the queuine precursor 7-aminomethyl-7-deazaguanine (PreQ1) at position 34 (anticodon wobble position) in tRNAs with GU(N) anticodons (tRNA-Asp, -Asn, -His and -Tyr). Catalysis occurs through a double-displacement mechanism. The nucleophile active site attacks the C1' of nucleotide 34 to detach the guanine base from the RNA, forming a covalent enzyme-RNA intermediate. The proton acceptor active site deprotonates the incoming PreQ1, allowing a nucleophilic attack on the C1' of the ribose to form the product. After dissociation, two additional enzymatic reactions on the tRNA convert PreQ1 to queuine (Q), resulting in the hypermodified nucleoside queuosine (7-(((4,5-cis-dihydroxy-2-cyclopenten-1-yl)amino)methyl)-7-deazaguanosine). The sequence is that of Queuine tRNA-ribosyltransferase from Zymomonas mobilis subsp. mobilis (strain ATCC 31821 / ZM4 / CP4).